The primary structure comprises 94 residues: MSRSLKKGPYCDARLLAKIEKMNETGEKRVIKTWSRASTIFPQMVGHTIAVHDGRKHVPVYITEDMVGHKLGEFAPTRIFRGHGAHTERSTALK.

It belongs to the universal ribosomal protein uS19 family.

In terms of biological role, protein S19 forms a complex with S13 that binds strongly to the 16S ribosomal RNA. The polypeptide is Small ribosomal subunit protein uS19 (Pelotomaculum thermopropionicum (strain DSM 13744 / JCM 10971 / SI)).